A 318-amino-acid chain; its full sequence is MKSLNIIFAGTPDFAAQHLQAILNSQHNVIAVYTQPDKPAGRGKKLQASPVKQLAEQNNIPVYQPKSLRKEEAQSELKALNADVMVVVAYGLILPKAVLDAPRLGCLNVHGSILPRWRGAAPIQRSIWAGDVQTGVTIMQMDEGLDTGDMLHKVYCDILPTETSTSLYNKLAELAPSALIDVLDNLENGKFIAEKQDGSQSNYAEKLSKEEAQLNWSLSAMQLERNIRAFNPWPIAYFSTEDKDGNAHTLKVYQAKVLPHQDKPAGTILSADKNGIQIATVDGVLNLLQLQSAGKKPMSAQDLLNGRAEWFTIGKVLA.

(6S)-5,6,7,8-tetrahydrofolate is bound at residue 112–115 (SILP).

The protein belongs to the Fmt family.

The catalysed reaction is L-methionyl-tRNA(fMet) + (6R)-10-formyltetrahydrofolate = N-formyl-L-methionyl-tRNA(fMet) + (6S)-5,6,7,8-tetrahydrofolate + H(+). Attaches a formyl group to the free amino group of methionyl-tRNA(fMet). The formyl group appears to play a dual role in the initiator identity of N-formylmethionyl-tRNA by promoting its recognition by IF2 and preventing the misappropriation of this tRNA by the elongation apparatus. The sequence is that of Methionyl-tRNA formyltransferase from Haemophilus influenzae (strain ATCC 51907 / DSM 11121 / KW20 / Rd).